Consider the following 258-residue polypeptide: Acyl-[acyl-carrier-protein]--UDP-N-acetylglucosamine O-acyltransferase (258 aa).

It belongs to the transferase hexapeptide repeat family. LpxA subfamily. As to quaternary structure, homotrimer.

The protein localises to the cytoplasm. It carries out the reaction a (3R)-hydroxyacyl-[ACP] + UDP-N-acetyl-alpha-D-glucosamine = a UDP-3-O-[(3R)-3-hydroxyacyl]-N-acetyl-alpha-D-glucosamine + holo-[ACP]. It participates in glycolipid biosynthesis; lipid IV(A) biosynthesis; lipid IV(A) from (3R)-3-hydroxytetradecanoyl-[acyl-carrier-protein] and UDP-N-acetyl-alpha-D-glucosamine: step 1/6. Functionally, involved in the biosynthesis of lipid A, a phosphorylated glycolipid that anchors the lipopolysaccharide to the outer membrane of the cell. This Neisseria meningitidis serogroup A / serotype 4A (strain DSM 15465 / Z2491) protein is Acyl-[acyl-carrier-protein]--UDP-N-acetylglucosamine O-acyltransferase.